The primary structure comprises 775 residues: Ankyrin repeat and EF-hand domain-containing protein 1 (775 aa).

8 ANK repeats span residues 47–76, 184–213, 217–246, 250–279, 524–553, 557–586, 590–619, and 623–652; these read DGLS…HPDV, TGRT…EVNA, DRHH…DMGL, DGNT…DLKW, TYKT…NVNA, FLWT…SIDA, NNST…KFQI, and KGHA…NLPK.

In Mus musculus (Mouse), this protein is Ankyrin repeat and EF-hand domain-containing protein 1 (Ankef1).